The primary structure comprises 289 residues: CRISPR system Cms protein Csm4 (289 aa).

It belongs to the CRISPR-associated Csm4 family. As to quaternary structure, probably part of the Csm effector complex, that includes Cas10, Csm2, Csm3, Csm4, Csm5 and mature crRNA. Interacts with Cas10 (csm1).

Its function is as follows. CRISPR (clustered regularly interspaced short palindromic repeat) is an adaptive immune system that provides protection against mobile genetic elements (viruses, transposable elements and conjugative plasmids). CRISPR clusters contain spacers, sequences complementary to antecedent mobile elements, and target invading nucleic acids. CRISPR clusters are transcribed and processed into CRISPR RNA (crRNA). The type III-A Csm effector complex binds crRNA and acts as a crRNA-guided RNase, DNase and cyclic oligoadenylate synthase; binding of target RNA cognate to the crRNA is required for all activities. Functionally, the subunit probably binds to the 5' handle of the crRNA, helping in discrimination between self- and non-self. The chain is CRISPR system Cms protein Csm4 from Thermococcus onnurineus (strain NA1).